A 542-amino-acid chain; its full sequence is Excitatory amino acid transporter 1 (542 aa).

The Cytoplasmic portion of the chain corresponds to 1-47 (MTKSNGEEPKMGGRMERFQQGVRKRTLLAKKKVQNITKEDVKSYLFR). Residues 48–68 (NAFVLLTVTAVIVGTILGFTL) traverse the membrane as a helical segment. Over 69–86 (RPYRMSYREVKYFSFPGE) the chain is Extracellular. A helical transmembrane segment spans residues 87 to 108 (LLMRMLQMLVLPLIISSLVTGM). The Cytoplasmic segment spans residues 109 to 122 (AALDSKASGKMGMR). Residues 123-145 (AVVYYMTTTIIAVVIGIIIVIII) form a helical membrane-spanning segment. Residues 146-236 (HPGKGTKENM…ITEELVPVPG (91 aa)) are Extracellular-facing. Residues 237 to 260 (SVNGVNALGLVVFSMCFGFVIGNM) form a helical membrane-spanning segment. Residues 261 to 269 (KEQGQALRE) lie on the Cytoplasmic side of the membrane. Residues 270–297 (FFDSLNEAIMRLVAVIMWYAPVGILFLI) traverse the membrane as a helical segment. At 298-318 (AGKIVEMEDMGVIGGQLAMYT) the chain is on the extracellular side. A helical transmembrane segment spans residues 319–340 (VTVIVGLLIHAVIVLPLLYFLV). The Cytoplasmic segment spans residues 341 to 345 (TRKNP). Positions 346-376 (WVFIGGLLQALITALGTSSSSATLPITFKCL) form an intramembrane region, discontinuously helical. 363 to 365 (SSS) contacts L-aspartate. At 377 to 385 (EENNGVDKR) the chain is on the cytoplasmic side. The helical transmembrane segment at 386–412 (VTRFVLPVGATINMDGTALYEALAAIF) threads the bilayer. 3 residues coordinate Na(+): Gly-394, Thr-396, and Asn-398. Thr-402 contributes to the L-aspartate binding site. Residues 413 to 425 (IAQVNNFELNFGQ) are Extracellular-facing. Positions 426-459 (IITISITATAASIGAAGIPQAGLVTMVIVLTSVG) form an intramembrane region, discontinuously helical. 443–447 (IPQAG) contacts L-aspartate. Topologically, residues 460-472 (LPTDDITLIIAVD) are extracellular. Residues 473–494 (WFLDRLRTTTNVLGDSLGAGIV) traverse the membrane as a helical segment. Positions 476 and 483 each coordinate L-aspartate. Na(+)-binding residues include Asn-483 and Asp-487. Topologically, residues 495-542 (EHLSRHELKNRDVEMGNSVIEENEMKKPYQLIAQDNETEKPIDSETKM) are cytoplasmic. Ser-512 is modified (phosphoserine).

This sequence belongs to the dicarboxylate/amino acid:cation symporter (DAACS) (TC 2.A.23) family. SLC1A3 subfamily. In terms of assembly, homotrimer. In terms of processing, glycosylated. Detected in brain. Detected at very much lower levels in heart, lung, placenta and skeletal muscle. Highly expressed in cerebellum, but also found in frontal cortex, hippocampus and basal ganglia.

Its subcellular location is the cell membrane. It carries out the reaction K(+)(in) + L-glutamate(out) + 3 Na(+)(out) + H(+)(out) = K(+)(out) + L-glutamate(in) + 3 Na(+)(in) + H(+)(in). The catalysed reaction is K(+)(in) + L-aspartate(out) + 3 Na(+)(out) + H(+)(out) = K(+)(out) + L-aspartate(in) + 3 Na(+)(in) + H(+)(in). It catalyses the reaction D-aspartate(out) + K(+)(in) + 3 Na(+)(out) + H(+)(out) = D-aspartate(in) + K(+)(out) + 3 Na(+)(in) + H(+)(in). Sodium-dependent, high-affinity amino acid transporter that mediates the uptake of L-glutamate and also L-aspartate and D-aspartate. Functions as a symporter that transports one amino acid molecule together with two or three Na(+) ions and one proton, in parallel with the counter-transport of one K(+) ion. Mediates Cl(-) flux that is not coupled to amino acid transport; this avoids the accumulation of negative charges due to aspartate and Na(+) symport. Plays a redundant role in the rapid removal of released glutamate from the synaptic cleft, which is essential for terminating the postsynaptic action of glutamate. This is Excitatory amino acid transporter 1 from Homo sapiens (Human).